A 1373-amino-acid polypeptide reads, in one-letter code: DNA-directed RNA polymerase subunit beta (1373 aa).

It belongs to the RNA polymerase beta chain family. In terms of assembly, the RNAP catalytic core consists of 2 alpha, 1 beta, 1 beta' and 1 omega subunit. When a sigma factor is associated with the core the holoenzyme is formed, which can initiate transcription.

The enzyme catalyses RNA(n) + a ribonucleoside 5'-triphosphate = RNA(n+1) + diphosphate. DNA-dependent RNA polymerase catalyzes the transcription of DNA into RNA using the four ribonucleoside triphosphates as substrates. The chain is DNA-directed RNA polymerase subunit beta from Rickettsia canadensis (strain McKiel).